Consider the following 233-residue polypeptide: Peptidyl-tRNA hydrolase (233 aa).

Tyr-14 lines the tRNA pocket. The active-site Proton acceptor is the His-19. Phe-64, Asn-66, and Asn-112 together coordinate tRNA. The disordered stretch occupies residues Val-187–Lys-233.

It belongs to the PTH family. As to quaternary structure, monomer.

Its subcellular location is the cytoplasm. It carries out the reaction an N-acyl-L-alpha-aminoacyl-tRNA + H2O = an N-acyl-L-amino acid + a tRNA + H(+). Its function is as follows. Hydrolyzes ribosome-free peptidyl-tRNAs (with 1 or more amino acids incorporated), which drop off the ribosome during protein synthesis, or as a result of ribosome stalling. In terms of biological role, catalyzes the release of premature peptidyl moieties from peptidyl-tRNA molecules trapped in stalled 50S ribosomal subunits, and thus maintains levels of free tRNAs and 50S ribosomes. This chain is Peptidyl-tRNA hydrolase, found in Roseobacter denitrificans (strain ATCC 33942 / OCh 114) (Erythrobacter sp. (strain OCh 114)).